A 546-amino-acid chain; its full sequence is Chaperonin GroEL (546 aa).

ATP-binding positions include Thr30–Pro33, Lys51, Asp87–Thr91, Gly415, Asn479–Ala481, and Asp495.

The protein belongs to the chaperonin (HSP60) family. As to quaternary structure, forms a cylinder of 14 subunits composed of two heptameric rings stacked back-to-back. Interacts with the co-chaperonin GroES.

It localises to the cytoplasm. The enzyme catalyses ATP + H2O + a folded polypeptide = ADP + phosphate + an unfolded polypeptide.. In terms of biological role, together with its co-chaperonin GroES, plays an essential role in assisting protein folding. The GroEL-GroES system forms a nano-cage that allows encapsulation of the non-native substrate proteins and provides a physical environment optimized to promote and accelerate protein folding. This is Chaperonin GroEL from Pseudomonas entomophila (strain L48).